The chain runs to 428 residues: Histone deacetylase 3 (428 aa).

Residues 3–316 form a histone deacetylase region; that stretch reads KTVAYFYDPD…WTYETSLLVE (314 aa). 3 residues coordinate 1D-myo-inositol 1,4,5,6-tetrakisphosphate: histidine 17, glycine 21, and lysine 25. Histidine 135 is a catalytic residue. Residues aspartate 170, histidine 172, and aspartate 259 each contribute to the Zn(2+) site. Arginine 265 contacts 1D-myo-inositol 1,4,5,6-tetrakisphosphate. Composition is skewed to basic and acidic residues over residues 388 to 405 and 415 to 428; these read DRTDEADAEERGPEENYS and DGDHDNDKESDVEI. The tract at residues 388–428 is disordered; the sequence is DRTDEADAEERGPEENYSRPEAPNEFYDGDHDNDKESDVEI. At serine 424 the chain carries Phosphoserine.

It belongs to the histone deacetylase family. HD type 1 subfamily. Interacts with HDAC7 and HDAC9. Interacts with DAXX, KDM4A, HDAC10 and DACH1. Found in a complex with NCOR1 and NCOR2. Component of the N-Cor repressor complex, at least composed of NCOR1, NCOR2, HDAC3, TBL1X, TBL1R, CORO2A and GPS2. Interacts with BCOR, MJD2A/JHDM3A, NRIP1, PRDM6 and SRY. Interacts with BTBD14B. Interacts with GLIS2. Interacts (via the DNA-binding domain) with NR2C1; the interaction recruits phosphorylated NR2C1 to PML bodies for sumoylation. Component of the Notch corepressor complex. Interacts with CBFA2T3 and NKAP. Interacts with APEX1; the interaction is not dependent on the acetylated status of APEX1. Interacts with ZMYND15. Interacts with SMRT/NCOR2 and BCL6 on DNA enhancer elements. Interacts with INSM1. Interacts with XBP1 isoform 1; the interaction occurs in endothelial cell (EC) under disturbed flow. Interacts (via C-terminus) with CCAR2 (via N-terminus). Interacts with and deacetylates MEF2D. Interacts with BEND3. Interacts with NKAPL. Interacts with DHX36; this interaction occurs in a RNA-dependent manner. Interacts weakly with CRY1; this interaction is enhanced in the presence of FBXL3. Interacts with FBXL3 and BMAL1. Interacts with NCOR1. Interacts with RARA. Interacts with SETD5. In terms of processing, sumoylated in vitro. Post-translationally, deubiquitinated on 'Lys-63'-linked ubiquitin chains by USP38; leading to a decreased level of histone acetylation.

Its subcellular location is the nucleus. The protein resides in the chromosome. The protein localises to the cytoplasm. It is found in the cytosol. It catalyses the reaction N(6)-acetyl-L-lysyl-[histone] + H2O = L-lysyl-[histone] + acetate. The catalysed reaction is N(6)-acetyl-L-lysyl-[protein] + H2O = L-lysyl-[protein] + acetate. The enzyme catalyses N(6)-(2E)-butenoyl-L-lysyl-[protein] + H2O = (2E)-2-butenoate + L-lysyl-[protein]. It carries out the reaction N(6)-(2-hydroxyisobutanoyl)-L-lysyl-[protein] + H2O = 2-hydroxy-2-methylpropanoate + L-lysyl-[protein]. It catalyses the reaction N(6)-[(S)-lactoyl]-L-lysyl-[protein] + H2O = (S)-lactate + L-lysyl-[protein]. Its activity is regulated as follows. Inositol tetraphosphate (1D-myo-inositol 1,4,5,6-tetrakisphosphate) promotes the histone deacetylase activity by acting as an intermolecular glue between HDAC3 and NCOR2, thereby promoting its association with the N-Cor complex, a prerequisite for the histone deacetylase activity. In terms of biological role, histone deacetylase that catalyzes the deacetylation of lysine residues on the N-terminal part of the core histones (H2A, H2B, H3 and H4), and some other non-histone substrates. Histone deacetylation gives a tag for epigenetic repression and plays an important role in transcriptional regulation, cell cycle progression and developmental events. Histone deacetylases act via the formation of large multiprotein complexes, such as N-Cor repressor complex, which activate the histone deacetylase activity. Participates in the BCL6 transcriptional repressor activity by deacetylating the H3 'Lys-27' (H3K27) on enhancer elements, antagonizing EP300 acetyltransferase activity and repressing proximal gene expression. Acts as a molecular chaperone for shuttling phosphorylated NR2C1 to PML bodies for sumoylation. Contributes, together with XBP1 isoform 1, to the activation of NFE2L2-mediated HMOX1 transcription factor gene expression in a PI(3)K/mTORC2/Akt-dependent signaling pathway leading to endothelial cell (EC) survival under disturbed flow/oxidative stress. Regulates both the transcriptional activation and repression phases of the circadian clock in a deacetylase activity-independent manner. During the activation phase, promotes the accumulation of ubiquitinated BMAL1 at the E-boxes and during the repression phase, blocks FBXL3-mediated CRY1/2 ubiquitination and promotes the interaction of CRY1 and BMAL1. The NCOR1-HDAC3 complex regulates the circadian expression of the core clock gene BMAL1 and the genes involved in lipid metabolism in the liver. Also functions as deacetylase for non-histone targets, such as KAT5, MEF2D, MAPK14, RARA and STAT3. Serves as a corepressor of RARA, mediating its deacetylation and repression, leading to inhibition of RARE DNA element binding. In addition to protein deacetylase activity, also acts as a protein-lysine deacylase by recognizing other acyl groups: catalyzes removal of (2E)-butenoyl (crotonyl), lactoyl (lactyl) and 2-hydroxyisobutanoyl (2-hydroxyisobutyryl) acyl groups from lysine residues, leading to protein decrotonylation, delactylation and de-2-hydroxyisobutyrylation, respectively. Catalyzes decrotonylation of MAPRE1/EB1. Mediates delactylation NBN/NBS1, thereby inhibiting DNA double-strand breaks (DSBs) via homologous recombination (HR). The polypeptide is Histone deacetylase 3 (Mus musculus (Mouse)).